A 2375-amino-acid chain; its full sequence is CCR4-NOT transcription complex subunit 1 (2375 aa).

Short sequence motifs (LXXLL) lie at residues 153–157, 181–185, and 223–227; these read LPDLL, LHLLL, and LAPLL. A Phosphoserine modification is found at S318. Positions 570 to 574 match the LXXLL motif; the sequence is LSMLL. The interval 725–770 is disordered; the sequence is SAAPHTQSMQGFPPNLGSAFSTPQSPAKAFPPLSTPNQTTAFSGIG. The segment at 799-1014 is interaction with ZFP36; that stretch reads NNDPFVQRKL…QGSITTPGSI (216 aa). Phosphoserine is present on S1060. The interval 1089–1604 is interaction with CNOT6, CNOT6L, CNOT7 and CNOT8; that stretch reads EPPENIQEKI…AQPMKQAWAT (516 aa). Over residues 1314-1326 the composition is skewed to basic and acidic residues; the sequence is QLSAPKKDVKQPE. The interval 1314 to 1351 is disordered; that stretch reads QLSAPKKDVKQPEELPAITTTTTSTTPATSTTCTATVP. The span at 1332-1349 shows a compositional bias: low complexity; it reads TTTTTSTTPATSTTCTAT. Short sequence motifs (LXXLL) lie at residues 1638–1642, 1941–1945, and 2095–2099; these read LRSLL, LIALL, and LRVLL.

It belongs to the CNOT1 family. In terms of assembly, component of the CCR4-NOT complex; distinct complexes seem to exist that differ in the participation of probably mutually exclusive catalytic subunits. In the complex, interacts directly with CNOT6, CNOT6L, CNOT7 or CNOT8. Interacts in a ligand-dependent fashion with ESR1 and RXRA. Interacts with NANOS2, TOB1 and ZFP36. Interacts with TNRC6A, TNRC6B or TNRC6C; the interactions are direct. Interacts with YTHDF2; the interaction is direct and promotes recruitment of the CCR4-NOT complex to N6-methyladenosine (m6A)-containing mRNAs, leading to their deadenylation and subsequent degradation. Interacts with EIF4ENIF1/4E-T. Interacts in an RNA-independent manner with BICC1 (via KH domains). Interacts with TEX13A; the interaction may inhibit CNOT1 binding to mRNA and subsequently CNOT1-mediated mRNA degradation.

It is found in the cytoplasm. Its subcellular location is the P-body. It localises to the nucleus. Functionally, scaffolding component of the CCR4-NOT complex which is one of the major cellular mRNA deadenylases and is linked to various cellular processes including bulk mRNA degradation, miRNA-mediated repression, translational repression during translational initiation and general transcription regulation. Additional complex functions may be a consequence of its influence on mRNA expression. Its scaffolding function implies its interaction with the catalytic complex module and diverse RNA-binding proteins mediating the complex recruitment to selected mRNA 3'UTRs. Involved in degradation of AU-rich element (ARE)-containing mRNAs probably via association with ZFP36. Mediates the recruitment of the CCR4-NOT complex to miRNA targets and to the RISC complex via association with TNRC6A, TNRC6B or TNRC6C. Acts as a transcriptional repressor. Represses the ligand-dependent transcriptional activation by nuclear receptors. Involved in the maintenance of embryonic stem (ES) cell identity; prevents their differentiation towards extraembryonic trophectoderm lineages. Plays a role in rapid sperm motility via mediating timely mRNA turnover. The polypeptide is CCR4-NOT transcription complex subunit 1 (Cnot1) (Mus musculus (Mouse)).